The chain runs to 354 residues: Protein RecA (354 aa).

Residue 67–74 (GPESSGKT) participates in ATP binding.

This sequence belongs to the RecA family.

It is found in the cytoplasm. Functionally, can catalyze the hydrolysis of ATP in the presence of single-stranded DNA, the ATP-dependent uptake of single-stranded DNA by duplex DNA, and the ATP-dependent hybridization of homologous single-stranded DNAs. It interacts with LexA causing its activation and leading to its autocatalytic cleavage. This is Protein RecA from Pasteurella multocida (strain Pm70).